Here is a 369-residue protein sequence, read N- to C-terminus: MNVNGKWYRAIWPNEHDPETVEIIDQRKLPHRFEIVGLTTVKKTIQAIRDMYVRGAPLIGATGAWGVYLAVVNMKDAENPLQYLKEECFKISNARPTAVNLEWAVKAMEAAILEKSNVEDWIKAAWSKAIEITEAEVKNCRQIGVHGSPLIEEISKNKNGKTVNILTHCNAGWLACVDHGTATAPIYAAFDKGIDVHVWVDETRPLNQGSRLTAWELGQHGVPHTIITDNAGGHLMQHGKVDMVIVGTDRTTHTGDVANKVGTYLKALAAKDNNVPFYVALPSSTIDWEMKNGVKDIPIENRDPDEVRKVWGLHDGHLVDVLVPPEESPALNVAFDVTPARLVTGLITERGLCKASEEGVRSLFPDKMK.

Substrate contacts are provided by residues 54–56, Arg95, and Gln208; that span reads RGA. Asp249 serves as the catalytic Proton donor. Substrate is bound at residue 259–260; the sequence is NK.

It belongs to the eIF-2B alpha/beta/delta subunits family. MtnA subfamily.

It catalyses the reaction 5-(methylsulfanyl)-alpha-D-ribose 1-phosphate = 5-(methylsulfanyl)-D-ribulose 1-phosphate. It participates in amino-acid biosynthesis; L-methionine biosynthesis via salvage pathway; L-methionine from S-methyl-5-thio-alpha-D-ribose 1-phosphate: step 1/6. In terms of biological role, catalyzes the interconversion of methylthioribose-1-phosphate (MTR-1-P) into methylthioribulose-1-phosphate (MTRu-1-P). The polypeptide is Methylthioribose-1-phosphate isomerase (Desulfatibacillum aliphaticivorans).